Here is a 331-residue protein sequence, read N- to C-terminus: N-acetyl-alpha-D-glucosaminyl-diphospho-ditrans,octacis-undecaprenol 4-epimerase (331 aa).

NAD(+)-binding positions include 13-14 (FV), 34-39 (QQSHFY), 47-48 (DV), Ser109, Tyr132, and Lys136. 2 residues coordinate substrate: Ser109 and Tyr132. The active-site Proton acceptor is Tyr132. Substrate contacts are provided by residues 183 to 184 (GK) and 199 to 201 (YVG).

It belongs to the NAD(P)-dependent epimerase/dehydratase family. It depends on NAD(+) as a cofactor.

It localises to the cell membrane. It carries out the reaction N-acetyl-alpha-D-glucosaminyl-di-trans,octa-cis-undecaprenyl diphosphate = N-acetyl-alpha-D-galactosaminyl-di-trans,octa-cis-undecaprenyl diphosphate. It participates in bacterial outer membrane biogenesis; LPS O-antigen biosynthesis. In terms of biological role, involved in biosynthesis of the repeating tetrasaccharide unit of the O-antigen. Catalyzes the reversible epimerization of the hydroxyl group at position C4 of undecaprenyl pyrophosphate-N-acetylglucosamine (UndPP-GlcNAc) to yield undecaprenyl pyrophosphate-N-acetylgalactosamine (UndPP-GalNAc). This chain is N-acetyl-alpha-D-glucosaminyl-diphospho-ditrans,octacis-undecaprenol 4-epimerase, found in Escherichia coli O157:H7.